A 220-amino-acid chain; its full sequence is RNA polymerase sigma GP28 factor (220 aa).

Functionally, sigma factors are initiation factors that promote the attachment of RNA polymerase to specific initiation sites and are then released. This sigma factor is responsible for the expression of the phage middle genes. The protein is RNA polymerase sigma GP28 factor (28) of Bacillus subtilis (Bacteriophage SP01).